The sequence spans 591 residues: L-fucose isomerase (591 aa).

Active-site proton acceptor residues include Glu-337 and Asp-361. Residues Glu-337, Asp-361, and His-528 each coordinate Mn(2+).

This sequence belongs to the L-fucose isomerase family. Homohexamer. The cofactor is Mn(2+).

The protein resides in the cytoplasm. It carries out the reaction L-fucose = L-fuculose. The enzyme catalyses D-arabinose = D-ribulose. It catalyses the reaction L-xylopyranose = L-xylulose. Its pathway is carbohydrate degradation; L-fucose degradation; L-lactaldehyde and glycerone phosphate from L-fucose: step 1/3. Inhibited by ribitol, L-arabitol and dulcitol. Isomerization of L-xylulose to L-xylose is inhibited by xylitol. Its function is as follows. Converts the aldose L-fucose into the corresponding ketose L-fuculose. Also converts D-arabinose into D-ribulose. In addition, catalyzes the isomerization of L-xylulose to L-xylose. This is L-fucose isomerase from Escherichia coli (strain K12).